Consider the following 434-residue polypeptide: Iron transporter MagA (434 aa).

Transmembrane regions (helical) follow at residues 6–26 (PELT…GMMT), 31–51 (PAVV…FGLV), 56–76 (AVAT…GMKL), 86–106 (KTAI…ALLL), 113–133 (SLGL…AVVI), 176–196 (LLPA…LLFW), 269–289 (SVLL…KFIW), 294–314 (TVLT…VTAL), 321–341 (WPSA…SFLL), and 357–377 (KLVV…LFTM).

This sequence belongs to the monovalent cation:proton antiporter 2 (CPA2) transporter (TC 2.A.37) family.

It is found in the membrane. Functionally, iron transporter, which is required for the synthesis of bacterial magnetic particles (BMPs). Probably involved in the transport of iron from the environment into the cytoplasm across the cell membrane, and then from the cytoplasm into the BMP lipid vesicle across the BMP membrane. This is Iron transporter MagA (magA) from Paramagnetospirillum magneticum (strain ATCC 700264 / AMB-1) (Magnetospirillum magneticum).